The following is a 425-amino-acid chain: 3-deoxy-D-manno-octulosonic acid transferase (425 aa).

The chain crosses the membrane as a helical; Signal-anchor span at residues Glu-3–Val-23. Catalysis depends on Glu-60, which acts as the Proton acceptor. CMP contacts are provided by residues Pro-268–Arg-269, Met-309–Glu-311, and Asn-335–Glu-338.

It belongs to the glycosyltransferase group 1 family. Glycosyltransferase 30 subfamily.

The protein localises to the cell inner membrane. The catalysed reaction is lipid IVA (E. coli) + CMP-3-deoxy-beta-D-manno-octulosonate = alpha-Kdo-(2-&gt;6)-lipid IVA (E. coli) + CMP + H(+). It catalyses the reaction alpha-Kdo-(2-&gt;6)-lipid IVA (E. coli) + CMP-3-deoxy-beta-D-manno-octulosonate = alpha-Kdo-(2-&gt;4)-alpha-Kdo-(2-&gt;6)-lipid IVA (E. coli) + CMP + H(+). It participates in glycolipid biosynthesis; KDO(2)-lipid A biosynthesis; KDO(2)-lipid A from CMP-3-deoxy-D-manno-octulosonate and lipid IV(A): step 1/4. The protein operates within glycolipid biosynthesis; KDO(2)-lipid A biosynthesis; KDO(2)-lipid A from CMP-3-deoxy-D-manno-octulosonate and lipid IV(A): step 2/4. It functions in the pathway bacterial outer membrane biogenesis; LPS core biosynthesis. Functionally, involved in lipopolysaccharide (LPS) biosynthesis. Catalyzes the transfer of two 3-deoxy-D-manno-octulosonate (Kdo) residues from CMP-Kdo to lipid IV(A), the tetraacyldisaccharide-1,4'-bisphosphate precursor of lipid A. This chain is 3-deoxy-D-manno-octulosonic acid transferase (waaA), found in Escherichia coli O157:H7.